A 431-amino-acid chain; its full sequence is Keratin, type I cytoskeletal 40 (431 aa).

A head region spans residues 1–89 (MASEGSPDCC…CEEGTFNSNE (89 aa)). The region spanning 89-400 (EKETMQFLND…GLLEKEDSRL (312 aa)) is the IF rod domain. A coil 1A region spans residues 90 to 124 (KETMQFLNDRLASYLERVRSLEENNAELECRIREQ). The linker 1 stretch occupies residues 125–135 (CEPDATPVCPD). The segment at 136–236 (YQRYFDTIEE…HEEEVNLLRE (101 aa)) is coil 1B. Residues 237-252 (QLGDRLNVELDTAPTV) form a linker 12 region. The segment at 253 to 396 (DLNKVLDEMR…NTYRGLLEKE (144 aa)) is coil 2. Residues 397–431 (DSRLPCNPGSTASISNSACEPCSAYVICTVENCCA) form a tail region.

Belongs to the intermediate filament family. As to quaternary structure, heterotetramer of two type I and two type II keratins.

In terms of biological role, may play a role in late hair differentiation. The polypeptide is Keratin, type I cytoskeletal 40 (Krt40) (Rattus norvegicus (Rat)).